Here is a 245-residue protein sequence, read N- to C-terminus: Enolase-phosphatase E1 (245 aa).

It belongs to the HAD-like hydrolase superfamily. MasA/MtnC family. In terms of assembly, monomer. The cofactor is Mg(2+).

It catalyses the reaction 5-methylsulfanyl-2,3-dioxopentyl phosphate + H2O = 1,2-dihydroxy-5-(methylsulfanyl)pent-1-en-3-one + phosphate. It participates in amino-acid biosynthesis; L-methionine biosynthesis via salvage pathway; L-methionine from S-methyl-5-thio-alpha-D-ribose 1-phosphate: step 3/6. The protein operates within amino-acid biosynthesis; L-methionine biosynthesis via salvage pathway; L-methionine from S-methyl-5-thio-alpha-D-ribose 1-phosphate: step 4/6. Bifunctional enzyme that catalyzes the enolization of 2,3-diketo-5-methylthiopentyl-1-phosphate (DK-MTP-1-P) into the intermediate 2-hydroxy-3-keto-5-methylthiopentenyl-1-phosphate (HK-MTPenyl-1-P), which is then dephosphorylated to form the acireductone 1,2-dihydroxy-3-keto-5-methylthiopentene (DHK-MTPene). In Parasynechococcus marenigrum (strain WH8102), this protein is Enolase-phosphatase E1.